We begin with the raw amino-acid sequence, 842 residues long: DNA topoisomerase-like protein cin-4 (842 aa).

Residues 1–26 (MSEEDRNVFTSIDKKGGGSKQMDDLN) are compositionally biased toward basic and acidic residues. A disordered region spans residues 1-50 (MSEEDRNVFTSIDKKGGGSKQMDDLNQKCPKRKTSKLKGIPKLEDANDAG). The 470-residue stretch at 314-783 (IPCLVDGLKP…TWQDLWITDL (470 aa)) folds into the Topo IIA-type catalytic domain.

The protein belongs to the type II topoisomerase family.

Plays a role in the removal of cohesin from kinetochores on mitotic chromosomes and is required for centromere resolution. This chain is DNA topoisomerase-like protein cin-4, found in Caenorhabditis elegans.